We begin with the raw amino-acid sequence, 361 residues long: uncharacterized protein (361 aa).

A signal peptide spans 1-19 (MNLVICVLLLSIWKNNCMT). Residues 20-47 (TNQTNGSSTTGDKPVESMQTKLNYLRRN) are Extracellular-facing. A glycan (N-linked (GlcNAc...) asparagine) is linked at N24. The chain crosses the membrane as a helical span at residues 48 to 68 (LLILVGIIIMVFVFICFCYLH). The Cytoplasmic portion of the chain corresponds to 69 to 361 (YNCLSDDASK…QVTSEVTLND (293 aa)). Residues 99–113 (AKTASQCSPETQPML) are compositionally biased toward polar residues. 3 disordered regions span residues 99-184 (AKTA…KAHK), 209-247 (PPQL…NPKR), and 295-316 (QNLH…LDSR). Residues 114–133 (STADKSSDSSSPERASAQSS) show a composition bias toward low complexity. A compositionally biased stretch (polar residues) spans 141-150 (SSLQKPSIPN). The segment covering 299–308 (VSSKVKSSSR) has biased composition (low complexity).

Its subcellular location is the membrane. This is an uncharacterized protein from Homo sapiens (Human).